Consider the following 220-residue polypeptide: Octanoyltransferase (220 aa).

The BPL/LPL catalytic domain occupies 34 to 209; it reads ENSQDEIWVV…TLSQELGLAN (176 aa). Substrate-binding positions include 73 to 80, 140 to 142, and 153 to 155; these read RGGQVTYH, SLG, and GLA. The active-site Acyl-thioester intermediate is the C171.

This sequence belongs to the LipB family.

The protein localises to the cytoplasm. It carries out the reaction octanoyl-[ACP] + L-lysyl-[protein] = N(6)-octanoyl-L-lysyl-[protein] + holo-[ACP] + H(+). The protein operates within protein modification; protein lipoylation via endogenous pathway; protein N(6)-(lipoyl)lysine from octanoyl-[acyl-carrier-protein]: step 1/2. Functionally, catalyzes the transfer of endogenously produced octanoic acid from octanoyl-acyl-carrier-protein onto the lipoyl domains of lipoate-dependent enzymes. Lipoyl-ACP can also act as a substrate although octanoyl-ACP is likely to be the physiological substrate. The polypeptide is Octanoyltransferase (Shewanella piezotolerans (strain WP3 / JCM 13877)).